A 131-amino-acid polypeptide reads, in one-letter code: Fimbrial assembly protein, serogroups C1 and C2 (131 aa).

The chain is Fimbrial assembly protein, serogroups C1 and C2 (fimB) from Dichelobacter nodosus (Bacteroides nodosus).